The sequence spans 178 residues: ATP synthase subunit delta (178 aa).

Belongs to the ATPase delta chain family. F-type ATPases have 2 components, F(1) - the catalytic core - and F(0) - the membrane proton channel. F(1) has five subunits: alpha(3), beta(3), gamma(1), delta(1), epsilon(1). F(0) has three main subunits: a(1), b(2) and c(10-14). The alpha and beta chains form an alternating ring which encloses part of the gamma chain. F(1) is attached to F(0) by a central stalk formed by the gamma and epsilon chains, while a peripheral stalk is formed by the delta and b chains.

Its subcellular location is the cell membrane. In terms of biological role, f(1)F(0) ATP synthase produces ATP from ADP in the presence of a proton or sodium gradient. F-type ATPases consist of two structural domains, F(1) containing the extramembraneous catalytic core and F(0) containing the membrane proton channel, linked together by a central stalk and a peripheral stalk. During catalysis, ATP synthesis in the catalytic domain of F(1) is coupled via a rotary mechanism of the central stalk subunits to proton translocation. This protein is part of the stalk that links CF(0) to CF(1). It either transmits conformational changes from CF(0) to CF(1) or is implicated in proton conduction. This chain is ATP synthase subunit delta, found in Anoxybacillus flavithermus (strain DSM 21510 / WK1).